We begin with the raw amino-acid sequence, 435 residues long: Acetylcholine receptor-like protein cup-4 (435 aa).

Positions 1–24 are cleaved as a signal peptide; sequence MRLLLIFTVIFVFYLAILKRDVNA. N-linked (GlcNAc...) asparagine glycans are attached at residues asparagine 41, asparagine 68, asparagine 237, and asparagine 249. 2 helical membrane-spanning segments follow: residues 298-318 and 341-361; these read VSFFAPTVSLAFVINLMAIYL and ITLFHILLISNIVSAVFHGVL. The N-linked (GlcNAc...) asparagine glycan is linked to asparagine 403. Residues 413-433 form a helical membrane-spanning segment; that stretch reads PLAGLAMFVYFVIMFILYLVV.

This sequence belongs to the ligand-gated ion channel (TC 1.A.9) family. Acetylcholine receptor (TC 1.A.9.1) subfamily.

The protein resides in the cytoplasmic vesicle membrane. In terms of biological role, thought to regulate endocytosis in coelomocytes through modulation of phospholipase C activity. Possible acetylcholine receptor. The sequence is that of Acetylcholine receptor-like protein cup-4 from Caenorhabditis briggsae.